Consider the following 405-residue polypeptide: MENSMTLPKIKQVRAWFTGGATAEKGAGGGDYHDQGANHWIDDHIATPMSKYRDYEQSRQSFGINVLGTLIVEVEAENGQTGFAVSTAGEMGCFIVEKHLNRFIEGKCVSDIKLIHDQMLNATLYYSGSGGLVMNTISCVDLALWDLFGKVVGLPVYKLLGGAVRDEIQFYATGARPDLAKEMGFIGGKMPTHWGPHDGDAGIRKDAAMVADMREKCGEDFWLMLDCWMSQDVNYATKLAHACAPYNLKWIEECLPPQQYEGYRELKRNAPAGMMVTSGEHHGTLQSFRTLSETGIDIMQPDVGWCGGLTTLVEIAAIAKSRGQLVVPHGSSVYSHHAVITFTNTPFSEFLMTSPDCSTMRPQFDPILLNEPVPVNGRIHKSVLDKPGFGVELNRDCNLKRPYSH.

Substrate is bound by residues His-33 and Arg-59. Residues Asp-226, Glu-252, and Glu-280 each contribute to the Mg(2+) site. His-329 functions as the Proton acceptor in the catalytic mechanism. Glu-349 contacts substrate.

The protein belongs to the mandelate racemase/muconate lactonizing enzyme family. RhamD subfamily. Homooctamer; tetramer of dimers. Mg(2+) is required as a cofactor.

It catalyses the reaction L-rhamnonate = 2-dehydro-3-deoxy-L-rhamnonate + H2O. Catalyzes the dehydration of L-rhamnonate to 2-keto-3-deoxy-L-rhamnonate (KDR). The polypeptide is L-rhamnonate dehydratase (Escherichia coli (strain SMS-3-5 / SECEC)).